The sequence spans 391 residues: Pectin acetylesterase 11 (391 aa).

A signal peptide spans 1 to 23 (MTWLKQMWSSILVLAVVVIGARA). Residues Ser171, Asp267, and His334 each act as charge relay system in the active site.

This sequence belongs to the pectinacetylesterase family.

The protein resides in the secreted. It localises to the cell wall. Hydrolyzes acetyl esters in homogalacturonan regions of pectin. In type I primary cell wall, galacturonic acid residues of pectin can be acetylated at the O-2 and O-3 positions. Decreasing the degree of acetylation of pectin gels in vitro alters their physical properties. This is Pectin acetylesterase 11 from Arabidopsis thaliana (Mouse-ear cress).